The sequence spans 246 residues: NAD-dependent protein deacylase (246 aa).

In terms of domain architecture, Deacetylase sirtuin-type spans Met1–Pro245. Residue Gly20–Trp39 participates in NAD(+) binding. Positions 64 and 67 each coordinate substrate. NAD(+) is bound at residue Gln98–Asp101. The active-site Proton acceptor is the His116. Cys124, Cys127, Cys146, and Cys149 together coordinate Zn(2+). Residues Gly186–Ser188, Asn212–Glu214, and Thr230 contribute to the NAD(+) site.

This sequence belongs to the sirtuin family. Class III subfamily. The cofactor is Zn(2+).

It is found in the cytoplasm. It carries out the reaction N(6)-acetyl-L-lysyl-[protein] + NAD(+) + H2O = 2''-O-acetyl-ADP-D-ribose + nicotinamide + L-lysyl-[protein]. The catalysed reaction is N(6)-succinyl-L-lysyl-[protein] + NAD(+) + H2O = 2''-O-succinyl-ADP-D-ribose + nicotinamide + L-lysyl-[protein]. In terms of biological role, NAD-dependent lysine deacetylase and desuccinylase that specifically removes acetyl and succinyl groups on target proteins. Modulates the activities of several proteins which are inactive in their acylated form. The chain is NAD-dependent protein deacylase from Leptospira interrogans serogroup Icterohaemorrhagiae serovar Lai (strain 56601).